The following is a 103-amino-acid chain: Large ribosomal subunit protein bL21 (103 aa).

This sequence belongs to the bacterial ribosomal protein bL21 family. As to quaternary structure, part of the 50S ribosomal subunit. Contacts protein L20.

Functionally, this protein binds to 23S rRNA in the presence of protein L20. This Shewanella sediminis (strain HAW-EB3) protein is Large ribosomal subunit protein bL21.